A 510-amino-acid chain; its full sequence is ETS translocation variant 5 (510 aa).

The disordered stretch occupies residues 131–208 (FKPLTPPTTP…QPLQMPKMMP (78 aa)). Residues 161–174 (GHAPAAGPVQGVGP) are compositionally biased toward low complexity. A compositionally biased stretch (pro residues) spans 175–185 (APAPHSLPEPG). Position 248 is a phosphoserine (S248). Residue K350 forms a Glycyl lysine isopeptide (Lys-Gly) (interchain with G-Cter in SUMO2) linkage. The ETS DNA-binding region spans 368–448 (LQLWQFLVTL…AGERYVYKFV (81 aa)).

In terms of assembly, interacts (via C-terminal) with ZMYM5 (via N-terminal 120 amino acid region). Ubiquitous.

It is found in the nucleus. Binds to DNA sequences containing the consensus nucleotide core sequence 5'-GGAA.-3'. The chain is ETS translocation variant 5 (ETV5) from Homo sapiens (Human).